Consider the following 315-residue polypeptide: tRNA dimethylallyltransferase (315 aa).

Position 11-18 (11-18 (GPTASGKS)) interacts with ATP. Residue 13–18 (TASGKS) coordinates substrate. Interaction with substrate tRNA regions lie at residues 36 to 39 (DSMQ) and 160 to 164 (QRLIR).

It belongs to the IPP transferase family. In terms of assembly, monomer. It depends on Mg(2+) as a cofactor.

It catalyses the reaction adenosine(37) in tRNA + dimethylallyl diphosphate = N(6)-dimethylallyladenosine(37) in tRNA + diphosphate. Functionally, catalyzes the transfer of a dimethylallyl group onto the adenine at position 37 in tRNAs that read codons beginning with uridine, leading to the formation of N6-(dimethylallyl)adenosine (i(6)A). In Rickettsia bellii (strain OSU 85-389), this protein is tRNA dimethylallyltransferase.